Reading from the N-terminus, the 1270-residue chain is Activating transcription factor 7-interacting protein 1 (1270 aa).

An N-acetylmethionine modification is found at Met1. Lys33 is covalently cross-linked (Glycyl lysine isopeptide (Lys-Gly) (interchain with G-Cter in SUMO2)). A phosphoserine mark is found at Ser57 and Ser113. 2 disordered regions span residues 104-223 and 235-402; these read DDDL…ISGD and TSVD…EDET. At Thr118 the chain carries Phosphothreonine. 2 stretches are compositionally biased toward low complexity: residues 132-203 and 248-269; these read GDPA…SSGD and DPASDDLASGDLSSSELASDDL. 2 stretches are compositionally biased toward basic and acidic residues: residues 310–327 and 333–343; these read SNKDDDFLEKNGADEKLE and DSLDEKNKADN. Positions 347-356 are enriched in acidic residues; that stretch reads ANEETLETDD. The span at 363-373 shows a compositional bias: basic and acidic residues; the sequence is RPPENEKKVEE. Ser445, Ser473, Ser474, Ser477, Ser479, and Ser496 each carry phosphoserine. Disordered stretches follow at residues 455-570, 658-685, 822-862, and 886-906; these read TSLL…SKRR, EDLKKRHEHPPNPPVSPGKTVNDVNSNN, PPTV…PTAS, and RTSLPTVGPSGLYSPSTNRGP. The span at 474–486 shows a compositional bias: polar residues; the sequence is SFGSPSKQESSES. A compositionally biased stretch (acidic residues) spans 496 to 509; that stretch reads SDEEDISGEKDESE. Positions 524 to 552 are enriched in basic and acidic residues; it reads SNEKDNKPEEEEQVIHEDDERPSEKNEFS. A Nuclear localization signal motif is present at residues 553-571; sequence RRKRSKSEDMDNVQSKRRR. Lys558 is covalently cross-linked (Glycyl lysine isopeptide (Lys-Gly) (interchain with G-Cter in SUMO2)). The residue at position 559 (Ser559) is a Phosphoserine. The segment at 562 to 817 is interaction with SETDB1; sequence MDNVQSKRRR…NQPSGNVEFI (256 aa). Residues 617–665 are a coiled coil; the sequence is KTLAELKTRVEKIECNKRHKTVLTELQAKIARLTKRFEAAKEDLKKRHE. At Ser673 the chain carries Phosphoserine. The span at 822–834 shows a compositional bias: polar residues; it reads PPTVSGLTKNPVS. Residues 843–854 show a composition bias toward low complexity; sequence KPNNVPSVPSPS. The residue at position 899 (Ser899) is a Phosphoserine. Residues Lys910 and Lys938 each participate in a glycyl lysine isopeptide (Lys-Gly) (interchain with G-Cter in SUMO2) cross-link. 2 stretches are compositionally biased toward polar residues: residues 918-942 and 950-964; these read TSSAAEQNSNTTPRIENQTNKTIDA and DSTSQCGKATGSDSS. Disordered regions lie at residues 918 to 1026 and 1115 to 1160; these read TSSA…SQTT and STGP…STSL. Positions 965 to 975 are interaction with SUMO; the sequence is GVIDLTMDDEE. Polar residues-rich tracts occupy residues 988-999 and 1016-1026; these read TPVSTMSSSQPV and GVPTSGPSQTT. Residues 1134 to 1151 show a composition bias toward pro residues; that stretch reads PRPVHPAPLPEAPQPQRL. The tract at residues 1154–1270 is interaction with MBD1; sequence EAASTSLPQK…TDVISSTQSS (117 aa). The Fibronectin type-III domain occupies 1160–1270; the sequence is LPQKPHLKLA…TDVISSTQSS (111 aa).

This sequence belongs to the MCAF family. In terms of assembly, interacts with MBD1; the interaction is enhanced when MBD1 is sumoylated. Interacts with SETDB1; the interaction protects SETDB1 from proteasomal degradation and is required to stimulate histone methyltransferase activity and facilitate the conversion of dimethylated to trimethylated H3 'Lys-9'. Interacts with SUMO ubiquitin-like proteins (SUMO1, SUNO2 and SUMO3), with a preference for SUMO2 and SUMO3. Interacts with SP1, ATF7 and ZHX1. Interacts with the general transcription machinery, including ERCC2, ERCC3, GTF2E1, GTF2E2 and POLR2A. As to quaternary structure, (Microbial infection) Interacts with Epstein-Barr virus BRLF1/Rta protein, leading to the regulation of host genes in Epstein-Barr virus-infected cells. Detected at low levels in breast, lung and stomach; highly up-regulated in the corresponding cancerous tissues (at protein level).

It localises to the nucleus. Its function is as follows. Recruiter that couples transcriptional factors to general transcription apparatus and thereby modulates transcription regulation and chromatin formation. Can both act as an activator or a repressor depending on the context. Required for HUSH-mediated heterochromatin formation and gene silencing. Mediates MBD1-dependent transcriptional repression, probably by recruiting complexes containing SETDB1. Stabilizes SETDB1, is required to stimulate histone methyltransferase activity of SETDB1 and facilitates the conversion of dimethylated to trimethylated H3 'Lys-9' (H3K9me3). The complex formed with MBD1 and SETDB1 represses transcription and couples DNA methylation and histone H3 'Lys-9' trimethylation (H3K9me3). Facilitates telomerase TERT and TERC gene expression by SP1 in cancer cells. This chain is Activating transcription factor 7-interacting protein 1, found in Homo sapiens (Human).